Reading from the N-terminus, the 343-residue chain is Dihydroorotase (343 aa).

The Zn(2+) site is built by H13 and H15. Substrate is bound by residues 15–17 (HLR) and N41. Residues K99, H136, and H174 each contribute to the Zn(2+) site. K99 carries the post-translational modification N6-carboxylysine. H136 contributes to the substrate binding site. A substrate-binding site is contributed by L219. Residue D247 coordinates Zn(2+). The active site involves D247. Residues H251 and A263 each contribute to the substrate site.

Belongs to the metallo-dependent hydrolases superfamily. DHOase family. Class II DHOase subfamily. As to quaternary structure, homodimer. Requires Zn(2+) as cofactor.

It catalyses the reaction (S)-dihydroorotate + H2O = N-carbamoyl-L-aspartate + H(+). Its pathway is pyrimidine metabolism; UMP biosynthesis via de novo pathway; (S)-dihydroorotate from bicarbonate: step 3/3. Its function is as follows. Catalyzes the reversible cyclization of carbamoyl aspartate to dihydroorotate. This Shewanella sp. (strain ANA-3) protein is Dihydroorotase.